The chain runs to 227 residues: N-acetyltransferase 8 (227 aa).

Residues 1 to 42 (MAPCHIRKYQESDRQWVVGLLSRGMAEHAPATFRQLLKLPRT) are Cytoplasmic-facing. The helical; Signal-anchor for type II membrane protein transmembrane segment at 43–63 (LILLLGGPLALLLVSGSWLLA) threads the bilayer. The 160-residue stretch at 61–220 (LLALVFSISL…HTVHFIYHLP (160 aa)) folds into the N-acetyltransferase domain. Residues 64–227 (LVFSISLFPA…HLPSSKVGSL (164 aa)) lie on the Lumenal side of the membrane.

This sequence belongs to the NAT8 family. As to expression, preferentially expressed in liver and kidney. Also detected in brain (at protein level).

It localises to the endoplasmic reticulum-Golgi intermediate compartment membrane. The protein localises to the endoplasmic reticulum membrane. The enzyme catalyses L-lysyl-[protein] + acetyl-CoA = N(6)-acetyl-L-lysyl-[protein] + CoA + H(+). It carries out the reaction an S-substituted L-cysteine + acetyl-CoA = an N-acetyl-L-cysteine-S-conjugate + CoA + H(+). It functions in the pathway sulfur metabolism; glutathione metabolism. In terms of biological role, endoplasmic reticulum (ER)-membrane-bound lysine N-acetyltransferase catalyzing the N6-acetylation of lysine residues in the lumen of the ER in various proteins, including PROM1 and BACE1, using acetyl-CoA as acetyl donor. Thereby, may regulate apoptosis through the acetylation and the regulation of the expression of PROM1. May also regulate amyloid beta-peptide secretion through acetylation of BACE1 and the regulation of its expression in neurons. N(6)-lysine acetylation in the ER maintains protein homeostasis and regulates reticulophagy. Alternatively, acetylates the free alpha-amino group of cysteine S-conjugates to form mercapturic acids. This is the final step in a major route for detoxification of a wide variety of reactive electrophiles which starts with their incorporation into glutathione S-conjugates. The glutathione S-conjugates are then further processed into cysteine S-conjugates and finally mercapturic acids which are water soluble and can be readily excreted in urine or bile. This Homo sapiens (Human) protein is N-acetyltransferase 8.